Here is a 444-residue protein sequence, read N- to C-terminus: Guanosine nucleotide diphosphate dissociation inhibitor 2 (444 aa).

This sequence belongs to the Rab GDI family. As to expression, expressed in roots and floral buds.

Regulates the GDP/GTP exchange reaction of most RAB proteins by inhibiting the dissociation of GDP from them, and the subsequent binding of GTP. The polypeptide is Guanosine nucleotide diphosphate dissociation inhibitor 2 (GDI2) (Arabidopsis thaliana (Mouse-ear cress)).